The following is a 488-amino-acid chain: UDP-GalNAc:beta-1,3-N-acetylgalactosaminyltransferase 2 (488 aa).

The Cytoplasmic portion of the chain corresponds to 1 to 2; sequence MR. A helical; Signal-anchor for type II membrane protein membrane pass occupies residues 3-23; sequence HLLLLFLCPCAIGVAFHLWLF. Asn24, Asn105, and Asn162 each carry an N-linked (GlcNAc...) asparagine glycan. The Lumenal segment spans residues 24–488; that stretch reads NFSGLFTWFP…CGNPCACEDR (465 aa).

It belongs to the glycosyltransferase 31 family.

Its subcellular location is the golgi apparatus membrane. The protein localises to the endoplasmic reticulum. It carries out the reaction 3-O-(N-acetyl-beta-D-glucosaminyl-(1-&gt;4)-alpha-D-mannosyl)-L-threonyl-[protein] + UDP-N-acetyl-alpha-D-galactosamine = 3-O-[beta-D-GalNAc-(1-&gt;3)-beta-D-GlcNAc-(1-&gt;4)-alpha-D-Man]-L-Thr-[protein] + UDP + H(+). The protein operates within protein modification; protein glycosylation. In terms of biological role, beta-1,3-N-acetylgalactosaminyltransferase that synthesizes a unique carbohydrate structure, GalNAc-beta-1-3GlcNAc, on N- and O-glycans. Has no galactose nor galactosaminyl transferase activity toward any acceptor substrate. Involved in alpha-dystroglycan (dag1) glycosylation. The polypeptide is UDP-GalNAc:beta-1,3-N-acetylgalactosaminyltransferase 2 (b3galnt2) (Xenopus tropicalis (Western clawed frog)).